A 776-amino-acid chain; its full sequence is MSSSLLSVLKEKSRSLKIRNKPVKMTSQERMIVHRCRFVDFTPATITSLAFSHKSNINKLTPSDLRLAIGRSNGNIEIWNPRNNWFQEMVIEGGKDRSIEGLCWSNVNGESLRLFSIGGSTVVTEWDLATGLPLRNYDCNSGVIWSISINDSQDKLSVGCDNGTVVLIDISGGPGVLEHDTILMRQEARVLTLAWKKDDFVIGGCSDGRIRIWSAQKNDENMGRLLHTMKVDKAKKESTLVWSVIYLPRTDQIASGDSTGSIKFWDFQFATLNQSFKAHDADVLCLTTDTDNNYVFSAGVDRKIFQFSQNTNKSQKNNRWVNSSNRLLHGNDIRAICAYQSKGADFLVSGGVEKTLVINSLTSFSNGNYRKMPTVEPYSKNVLVNKEQRLVVSWSESTVKIWTMGTDSSTEQNYKLVCKLTLKDDQNISTCSLSPDGQVLVVGRPSTTKVFHLQPVGNKLKVTKLDNDLLLRTSTKLVKFIDNSKIVICSCEDDVFIVDLESEEDEKPQEVELLEVTSTKSSIKVPYINRINHLEVDQNIAVISRGCGVVDILDLKARISKPLARLNNFITAVHINTSRKSVVVITADNKIYEFNMNLNSEAENEDSESVLTQWSKNNTDNLPKEWKTLKENCVGIFSDIENSSRLWFWGATWISRIDFDVDFPINKRRKQKKRTHEGLTITDESNFMNDEEDDEDDDIDMEISENLNVLLNQGNKIKSTDVQRNEESSGHFFFTDKYKPLLFVDLISSNELAIIERNPLTFHSKQKAFIQPKLVF.

WD repeat units lie at residues 35–40 (RCRFVD), 132–169 (LPLR…VLID), 178–214 (EHDT…RIWS), 230–266 (KVDK…KFWD), 271–308 (TLNQ…FQFS), and 417–452 (VCKL…KVFH).

As to quaternary structure, interacts with snoRNA U3. Interacts with MPP10. Component of the ribosomal small subunit (SSU) processome composed of at least 40 protein subunits and snoRNA U3. In the absence of snoRNA3, forms a complex with other t-UTPs. This complex can associate with pre-18S ribosomal RNAs.

Its subcellular location is the nucleus. The protein localises to the nucleolus. Its function is as follows. Involved in nucleolar processing of pre-18S ribosomal RNA. Required for optimal pre-ribosomal RNA transcription by RNA polymerase I together with a subset of U3 proteins required for transcription (t-UTPs). The sequence is that of U3 small nucleolar RNA-associated protein 4 (UTP4) from Saccharomyces cerevisiae (strain ATCC 204508 / S288c) (Baker's yeast).